Reading from the N-terminus, the 40-residue chain is Photosystem II reaction center protein J (40 aa).

The chain crosses the membrane as a helical span at residues 8 to 28 (IPLWLIGTVTGIPVIGSMGIF).

It belongs to the PsbJ family. In terms of assembly, PSII is composed of 1 copy each of membrane proteins PsbA, PsbB, PsbC, PsbD, PsbE, PsbF, PsbH, PsbI, PsbJ, PsbK, PsbL, PsbM, PsbT, PsbX, PsbY, PsbZ, Psb30/Ycf12, at least 3 peripheral proteins of the oxygen-evolving complex and a large number of cofactors. It forms dimeric complexes.

It localises to the plastid. The protein localises to the chloroplast thylakoid membrane. One of the components of the core complex of photosystem II (PSII). PSII is a light-driven water:plastoquinone oxidoreductase that uses light energy to abstract electrons from H(2)O, generating O(2) and a proton gradient subsequently used for ATP formation. It consists of a core antenna complex that captures photons, and an electron transfer chain that converts photonic excitation into a charge separation. This Illicium oligandrum (Star anise) protein is Photosystem II reaction center protein J.